Here is a 155-residue protein sequence, read N- to C-terminus: Deoxyuridine 5'-triphosphate nucleotidohydrolase (155 aa).

Residues 72–74, Asn85, 89–91, and Lys99 contribute to the substrate site; these read RSG and TVD.

It belongs to the dUTPase family. Requires Mg(2+) as cofactor.

It carries out the reaction dUTP + H2O = dUMP + diphosphate + H(+). It participates in pyrimidine metabolism; dUMP biosynthesis; dUMP from dCTP (dUTP route): step 2/2. Functionally, this enzyme is involved in nucleotide metabolism: it produces dUMP, the immediate precursor of thymidine nucleotides and it decreases the intracellular concentration of dUTP so that uracil cannot be incorporated into DNA. This Parvibaculum lavamentivorans (strain DS-1 / DSM 13023 / NCIMB 13966) protein is Deoxyuridine 5'-triphosphate nucleotidohydrolase.